We begin with the raw amino-acid sequence, 492 residues long: Transmembrane protein 39B (492 aa).

The disordered stretch occupies residues 1 to 53 (MGGRRGPNRTSYYRNPLCEPGSSGASGGGHSSSASVSSVRSRSRTTSGTGLSS). N-linked (GlcNAc...) asparagine glycosylation occurs at N8. Residues 31–53 (SSSASVSSVRSRSRTTSGTGLSS) show a composition bias toward low complexity. The next 8 membrane-spanning stretches (helical) occupy residues 77–97 (SILFELQLFFCQLIALFVHYI), 115–135 (TSLNFHLIDFNLLMVTTIVLG), 153–175 (SLFRSILLFLTRFTVLTATGWSL), 185–205 (TYSFLNLLFLCYPFGMYIPFL), 288–308 (EVLVSSMLSAYYVAFVPVWFV), 322–342 (LFLLVSISTSVILMQHLLPAS), 421–441 (ILNILLLLEGAVIVYQLYSLM), and 447–467 (HQTISLALILFSNYYAFFKLL).

The protein belongs to the TMEM39 family.

It localises to the endoplasmic reticulum membrane. Its function is as follows. May protect the cells against DNA damage caused by exposure to the cold-warming stress and facilitates tissue damage repair during the recovery phase. In Rattus norvegicus (Rat), this protein is Transmembrane protein 39B.